Here is a 472-residue protein sequence, read N- to C-terminus: 3-isopropylmalate dehydratase large subunit (472 aa).

The [4Fe-4S] cluster site is built by Cys-352, Cys-413, and Cys-416.

It belongs to the aconitase/IPM isomerase family. LeuC type 1 subfamily. As to quaternary structure, heterodimer of LeuC and LeuD. It depends on [4Fe-4S] cluster as a cofactor.

It catalyses the reaction (2R,3S)-3-isopropylmalate = (2S)-2-isopropylmalate. It functions in the pathway amino-acid biosynthesis; L-leucine biosynthesis; L-leucine from 3-methyl-2-oxobutanoate: step 2/4. Functionally, catalyzes the isomerization between 2-isopropylmalate and 3-isopropylmalate, via the formation of 2-isopropylmaleate. The sequence is that of 3-isopropylmalate dehydratase large subunit from Pseudomonas fluorescens (strain ATCC BAA-477 / NRRL B-23932 / Pf-5).